The chain runs to 340 residues: L-galactonate-5-dehydrogenase (340 aa).

Residues cysteine 40, cysteine 65, cysteine 92, cysteine 95, cysteine 98, cysteine 106, and glutamate 146 each coordinate Zn(2+).

This sequence belongs to the zinc-containing alcohol dehydrogenase family. It depends on Zn(2+) as a cofactor.

It carries out the reaction L-galactonate + NAD(+) = keto-D-tagaturonate + NADH + H(+). With respect to regulation, inhibited by EDTA. Functionally, catalyzes the oxidation of L-galactonate to D-tagaturonate. Required for growth on L-galactonate as the sole carbon source. In vitro, can also use L-gulonate. The polypeptide is L-galactonate-5-dehydrogenase (lgoD) (Escherichia coli (strain K12)).